The chain runs to 93 residues: MKIDESLVKRLETLSMVEIEDKASMAKDLAEIVEFVEMLNELDTSNVDATFSTLDNSTYLREDEPIKNNVIEEILEHAPKAKDGFFIVPKIIE.

This sequence belongs to the GatC family. In terms of assembly, heterotrimer of A, B and C subunits.

It carries out the reaction L-glutamyl-tRNA(Gln) + L-glutamine + ATP + H2O = L-glutaminyl-tRNA(Gln) + L-glutamate + ADP + phosphate + H(+). The enzyme catalyses L-aspartyl-tRNA(Asn) + L-glutamine + ATP + H2O = L-asparaginyl-tRNA(Asn) + L-glutamate + ADP + phosphate + 2 H(+). Its function is as follows. Allows the formation of correctly charged Asn-tRNA(Asn) or Gln-tRNA(Gln) through the transamidation of misacylated Asp-tRNA(Asn) or Glu-tRNA(Gln) in organisms which lack either or both of asparaginyl-tRNA or glutaminyl-tRNA synthetases. The reaction takes place in the presence of glutamine and ATP through an activated phospho-Asp-tRNA(Asn) or phospho-Glu-tRNA(Gln). The protein is Aspartyl/glutamyl-tRNA(Asn/Gln) amidotransferase subunit C of Nautilia profundicola (strain ATCC BAA-1463 / DSM 18972 / AmH).